We begin with the raw amino-acid sequence, 79 residues long: U1-plectoxin-Pt1c (79 aa).

An N-terminal signal peptide occupies residues 1–18; the sequence is HLILASALICALVVCTFA. The propeptide occupies 19-31; the sequence is EEQVNVPFLPDER. 5 disulfides stabilise this stretch: Cys-35-Cys-49, Cys-42-Cys-55, Cys-48-Cys-66, Cys-52-Cys-75, and Cys-57-Cys-64. The propeptide occupies 78-79; sequence RR.

The protein belongs to the neurotoxin 02 (plectoxin) family. 02 (plectoxin) subfamily. As to expression, expressed by the venom gland.

The protein resides in the secreted. Functionally, potent toxin that may paralyze and/or kill insect pests such as H.virescens (lepidoptera), S.exigua (beet armyworm) and M.sexta (tobacco hornworm). This is U1-plectoxin-Pt1c from Plectreurys tristis (Spider).